The sequence spans 460 residues: MASSQKLWGGRFTGATDPLMTAYNESIHYDKRMFNADIDGSKAYAKALEQRGIISADELDKMLDGLEAVRDEWKTNKFTLQPSDEDIHTANERRLGEIIGTGIAGKLHTGRSRNDQVTTDMRLWLRDELDIIQKSLVGLLQVFVARAESDLDIIMPGYTHLQRAQPIRWSHFLLSHAFSILNDLDRLKQIYSRVNRLPLGAGALAGNPFAVDRKFLQKELGFEGVIMNSMNAVADRDYVIEFMFWASMVMTHISRLAEDLIIYSTSEFNFVTLSDAYSTGSSIMPQKKNPDSLELLRGKSGRVFGNMMGFMVSVKGIPSTYNKDLQEDKEPLFDSSKTVLDSIQILTGVLSTLTVNPENIAKSLTADMLATDLAEYLVRKGVPFRETHHISGSAVRMAEERNTTIDKLSVEDFKSLHPLYEEDVADVFNYESSVEKRCAIGGTAKSCVLEQIQTIKKALE.

Positions 26, 114, and 159 each coordinate 2-(N(omega)-L-arginino)succinate. The active-site Proton acceptor is histidine 160. Serine 281 (proton donor) is an active-site residue. Residues asparagine 289, tyrosine 321, glutamine 326, and lysine 329 each contribute to the 2-(N(omega)-L-arginino)succinate site.

It belongs to the lyase 1 family. Argininosuccinate lyase subfamily. Homotetramer.

It catalyses the reaction 2-(N(omega)-L-arginino)succinate = fumarate + L-arginine. It participates in amino-acid biosynthesis; L-arginine biosynthesis; L-arginine from L-ornithine and carbamoyl phosphate: step 3/3. The chain is Probable argininosuccinate lyase (argx) from Schizosaccharomyces pombe (strain 972 / ATCC 24843) (Fission yeast).